The primary structure comprises 266 residues: Glucosamine-6-phosphate deaminase (266 aa).

D72 functions as the Proton acceptor; for enolization step in the catalytic mechanism. The active-site For ring-opening step is D141. Catalysis depends on H143, which acts as the Proton acceptor; for ring-opening step. Residue E148 is the For ring-opening step of the active site.

Belongs to the glucosamine/galactosamine-6-phosphate isomerase family. NagB subfamily. Homohexamer.

It carries out the reaction alpha-D-glucosamine 6-phosphate + H2O = beta-D-fructose 6-phosphate + NH4(+). Its pathway is amino-sugar metabolism; N-acetylneuraminate degradation; D-fructose 6-phosphate from N-acetylneuraminate: step 5/5. Allosterically activated by N-acetylglucosamine 6-phosphate (GlcNAc6P). Functionally, catalyzes the reversible isomerization-deamination of glucosamine 6-phosphate (GlcN6P) to form fructose 6-phosphate (Fru6P) and ammonium ion. The protein is Glucosamine-6-phosphate deaminase of Aeromonas hydrophila subsp. hydrophila (strain ATCC 7966 / DSM 30187 / BCRC 13018 / CCUG 14551 / JCM 1027 / KCTC 2358 / NCIMB 9240 / NCTC 8049).